The chain runs to 120 residues: Large ribosomal subunit protein uL22 (120 aa).

The interval 1-20 (MFVNRRYTARGKNLPSSPKK) is disordered.

It belongs to the universal ribosomal protein uL22 family. Part of the 50S ribosomal subunit.

This protein binds specifically to 23S rRNA; its binding is stimulated by other ribosomal proteins, e.g. L4, L17, and L20. It is important during the early stages of 50S assembly. It makes multiple contacts with different domains of the 23S rRNA in the assembled 50S subunit and ribosome. Functionally, the globular domain of the protein is located near the polypeptide exit tunnel on the outside of the subunit, while an extended beta-hairpin is found that lines the wall of the exit tunnel in the center of the 70S ribosome. The sequence is that of Large ribosomal subunit protein uL22 from Borrelia turicatae (strain 91E135).